A 367-amino-acid chain; its full sequence is Glutamate 5-kinase (367 aa).

Residue Lys-10 coordinates ATP. Substrate contacts are provided by Ser-50, Asp-137, and Asn-149. ATP contacts are provided by residues 169–170 (TD) and 211–217 (TGGMATK). Residues 275 to 353 (AGVIIVDNGA…QEISQILGYE (79 aa)) form the PUA domain.

Belongs to the glutamate 5-kinase family.

It is found in the cytoplasm. The catalysed reaction is L-glutamate + ATP = L-glutamyl 5-phosphate + ADP. Its pathway is amino-acid biosynthesis; L-proline biosynthesis; L-glutamate 5-semialdehyde from L-glutamate: step 1/2. Its function is as follows. Catalyzes the transfer of a phosphate group to glutamate to form L-glutamate 5-phosphate. This is Glutamate 5-kinase from Proteus mirabilis (strain HI4320).